The following is a 576-amino-acid chain: Trehalase (576 aa).

The N-terminal stretch at 1–20 is a signal peptide; that stretch reads MTWELHLLLLLGLGLRSQEA. Asn75 is a glycosylation site (N-linked (GlcNAc...) asparagine). Substrate contacts are provided by residues Arg165, 172-173, Asn209, and 218-220; these read WD and RSQ. Asn258 carries N-linked (GlcNAc...) asparagine glycosylation. Substrate-binding positions include 283–285 and Gly316; that span reads RPE. The active-site Proton donor/acceptor is the Asp318. The N-linked (GlcNAc...) asparagine glycan is linked to Asn366. Glu511 serves as the catalytic Proton donor/acceptor. Glu526 is a binding site for substrate. Residue Ser553 is the site of GPI-anchor amidated serine attachment. Positions 554–576 are cleaved as a propeptide — removed in mature form; it reads GTQLASLGPHCLVAALLLSLLLQ.

This sequence belongs to the glycosyl hydrolase 37 family. As to quaternary structure, homodimer; disulfide-linked.

It is found in the cell membrane. It carries out the reaction alpha,alpha-trehalose + H2O = alpha-D-glucose + beta-D-glucose. Intestinal trehalase is probably involved in the hydrolysis of ingested trehalose. This is Trehalase from Mus musculus (Mouse).